The primary structure comprises 293 residues: MDQECIENYAKVNGIYIYYKLCKAPEEKAKLMTMHGGPGMSHDYLLSLRDMTKEGITVLFYDQFGCGRSEEPDQSKFTIDYGVEEAEALRSKLFGNEKVFLMGSSYGGALALAYAVKYQDHLKGLIVSGGLSSVPLTVKEMNRLIDELPAKYRDAIKKYGSSGSYENPEYQEAVNYFYHQHLLRSEDWPPEVLKSLEYAERRNVYRIMNGPNEFTITGTIKDWDITDKISAIKIPTLITVGEYDEVTPNVARVIHEKIAGSELHVFRDCSHLTMWEDREGYNKLLSDFILKHL.

Residue serine 105 is the Nucleophile of the active site. Aspartate 244 is a catalytic residue. Histidine 271 serves as the catalytic Proton donor.

It belongs to the peptidase S33 family. In terms of assembly, part of the tricorn proteolytic complex.

The enzyme catalyses Release of N-terminal proline from a peptide.. In terms of biological role, cleaves H-Pro-AMC as well as a wide spectrum of amino acid substrates and several peptide substrates without a proline at the N-terminus. Proteases F1, F2 and F3 degrade oligopeptides produced by Tricorn (themselves probably produced by the proteasome) yielding free amino acids. This Thermoplasma acidophilum (strain ATCC 25905 / DSM 1728 / JCM 9062 / NBRC 15155 / AMRC-C165) protein is Proline iminopeptidase (pip).